The primary structure comprises 388 residues: Fetuin-B (388 aa).

The N-terminal stretch at 1-18 is a signal peptide; the sequence is MGLLRLLVLCTLAACCMA. Cystatin fetuin-B-type domains follow at residues 28–141 and 152–264; these read QRPL…YNCT and TTCP…VTCE. N40 is a glycosylation site (N-linked (GlcNAc...) asparagine). 5 disulfides stabilise this stretch: C96/C107, C120/C140, C154/C157, C217/C224, and C237/C263. N139 carries an N-linked (GlcNAc...) asparagine glycan. Disordered regions lie at residues 270-343 and 367-388; these read AQVP…PQGD and KEQR…VLPP. Over residues 279–300 the composition is skewed to polar residues; it reads AVTQGPQKLPQKNTAPTSSPSV. Residues T292 and T295 are each glycosylated (O-linked (GalNAc...) threonine). S321 carries the phosphoserine modification. Residues 367–381 are compositionally biased toward basic and acidic residues; that stretch reads KEQRSAECPGPEKEN.

Belongs to the fetuin family. Liver, lung and tongue.

The protein resides in the secreted. Functionally, protease inhibitor required for egg fertilization. Required to prevent premature zona pellucida hardening before fertilization, probably by inhibiting the protease activity of ASTL, a protease that mediates the cleavage of ZP2 and triggers zona pellucida hardening. The sequence is that of Fetuin-B (Fetub) from Mus musculus (Mouse).